Reading from the N-terminus, the 453-residue chain is L-cysteine:1D-myo-inositol 2-amino-2-deoxy-alpha-D-glucopyranoside ligase (453 aa).

Cysteine 58 is a binding site for Zn(2+). Residues 58–61, threonine 73, and 96–98 contribute to the L-cysteinyl-5'-AMP site; these read CGIT and NVT. A 'HIGH' region motif is present at residues 60–70; the sequence is ITPYDATHMGH. The short motif at 221-226 is the 'ERGGDP' region element; it reads ERGGDP. Tryptophan 262 is an L-cysteinyl-5'-AMP binding site. Cysteine 266 lines the Zn(2+) pocket. 284 to 286 serves as a coordination point for L-cysteinyl-5'-AMP; the sequence is GND. Histidine 291 is a Zn(2+) binding site. An L-cysteinyl-5'-AMP-binding site is contributed by valine 317. Residues 323-327 carry the 'KMSKS' region motif; the sequence is KMSKS.

This sequence belongs to the class-I aminoacyl-tRNA synthetase family. MshC subfamily. Monomer. Requires Zn(2+) as cofactor.

It carries out the reaction 1D-myo-inositol 2-amino-2-deoxy-alpha-D-glucopyranoside + L-cysteine + ATP = 1D-myo-inositol 2-(L-cysteinylamino)-2-deoxy-alpha-D-glucopyranoside + AMP + diphosphate + H(+). Its function is as follows. Catalyzes the ATP-dependent condensation of GlcN-Ins and L-cysteine to form L-Cys-GlcN-Ins. The polypeptide is L-cysteine:1D-myo-inositol 2-amino-2-deoxy-alpha-D-glucopyranoside ligase (Rothia mucilaginosa (strain DY-18) (Stomatococcus mucilaginosus)).